Reading from the N-terminus, the 354-residue chain is UPF0421 protein BH2644 (354 aa).

The next 4 helical transmembrane spans lie at 22 to 42 (AVCLTTAICMAFNLSPTFAVI), 60 to 80 (LIRLPAAALGAFFAVLSAYFF), 107 to 127 (TLVATLTAVAMIPSTTDHLFA), and 133 to 153 (VAGTSLGIMISTFVNFMILPP).

It belongs to the UPF0421 family.

Its subcellular location is the cell membrane. The protein is UPF0421 protein BH2644 of Halalkalibacterium halodurans (strain ATCC BAA-125 / DSM 18197 / FERM 7344 / JCM 9153 / C-125) (Bacillus halodurans).